The sequence spans 468 residues: Serine/threonine-protein kinase ULK3 (468 aa).

The Protein kinase domain occupies 13–269 (FILTEKLGSG…FIEFFAHLFV (257 aa)). Residues 19–27 (LGSGSYATV) and Lys-43 each bind ATP. Asp-136 functions as the Proton acceptor in the catalytic mechanism. MIT domains are found at residues 279-347 (TLEK…KVLV) and 374-442 (RLFS…KEQM).

The protein belongs to the protein kinase superfamily. Ser/Thr protein kinase family. APG1/unc-51/ULK1 subfamily.

It localises to the cytoplasm. It carries out the reaction L-seryl-[protein] + ATP = O-phospho-L-seryl-[protein] + ADP + H(+). The enzyme catalyses L-threonyl-[protein] + ATP = O-phospho-L-threonyl-[protein] + ADP + H(+). Functionally, serine/threonine protein kinase that acts as a regulator of Sonic hedgehog (SHH) signaling and autophagy. The polypeptide is Serine/threonine-protein kinase ULK3 (ulk3) (Xenopus laevis (African clawed frog)).